A 571-amino-acid chain; its full sequence is MRTSQYLFSTLKETPNDAQVVSHQLMLRAGMIRPMASGLYNWLPTGIKVLKKVENIIREEMNKGGAIEVLMPVVQPAELWQESGRWNDYGAELLRFVDRGSRDFVLGPTHEEVITDLVRREVSSYKQLPLNLYQIQTKFRDEVRPRFGVMRSREFVMKDAYSFHVDKASLQETYDVMYQVYSNIFTRLGLDFRAVQADTGSIGGSASHEFQVLASSGEDDVVFSTESDFAANIELAEAVAVGERQAPTAEMQLVDTPNAKTINELVEQFNLPIEKTVKTLIVKGATEEQSLVALVLRGDHELNEIKAQKHPLVADPLEFADEAEIKAKIGAGVGSLGVINLNVPAIIDRSVAVMSDFGCGANIDGRHYFNVNWERDVAMPEVADLRNVVEGDPSPDGKGVLQIKRGIEVGHIFQLGTKYSEAMKATVQGDDGKPLVMTMGCYGIGVTRVVAAAIEQHHDERGIIWPSDEIAPFTVAIVPMNMHKSESVQQFSEELYRTLKAQGVDVIFDDRKERPGVMFADMELIGVPHMVVIGEKNLANGEIEYKNRRTGEKQMIAKDQLLAFLKENVKA.

Belongs to the class-II aminoacyl-tRNA synthetase family. ProS type 1 subfamily. As to quaternary structure, homodimer.

The protein localises to the cytoplasm. The catalysed reaction is tRNA(Pro) + L-proline + ATP = L-prolyl-tRNA(Pro) + AMP + diphosphate. Functionally, catalyzes the attachment of proline to tRNA(Pro) in a two-step reaction: proline is first activated by ATP to form Pro-AMP and then transferred to the acceptor end of tRNA(Pro). As ProRS can inadvertently accommodate and process non-cognate amino acids such as alanine and cysteine, to avoid such errors it has two additional distinct editing activities against alanine. One activity is designated as 'pretransfer' editing and involves the tRNA(Pro)-independent hydrolysis of activated Ala-AMP. The other activity is designated 'posttransfer' editing and involves deacylation of mischarged Ala-tRNA(Pro). The misacylated Cys-tRNA(Pro) is not edited by ProRS. The polypeptide is Proline--tRNA ligase (Actinobacillus pleuropneumoniae serotype 7 (strain AP76)).